Here is a 196-residue protein sequence, read N- to C-terminus: Crossover junction endodeoxyribonuclease RuvC (196 aa).

Active-site residues include Asp19, Glu80, and Asp153. Residues Asp19, Glu80, and Asp153 each coordinate Mg(2+).

Belongs to the RuvC family. In terms of assembly, homodimer which binds Holliday junction (HJ) DNA. The HJ becomes 2-fold symmetrical on binding to RuvC with unstacked arms; it has a different conformation from HJ DNA in complex with RuvA. In the full resolvosome a probable DNA-RuvA(4)-RuvB(12)-RuvC(2) complex forms which resolves the HJ. Mg(2+) serves as cofactor.

The protein localises to the cytoplasm. The enzyme catalyses Endonucleolytic cleavage at a junction such as a reciprocal single-stranded crossover between two homologous DNA duplexes (Holliday junction).. In terms of biological role, the RuvA-RuvB-RuvC complex processes Holliday junction (HJ) DNA during genetic recombination and DNA repair. Endonuclease that resolves HJ intermediates. Cleaves cruciform DNA by making single-stranded nicks across the HJ at symmetrical positions within the homologous arms, yielding a 5'-phosphate and a 3'-hydroxyl group; requires a central core of homology in the junction. The consensus cleavage sequence is 5'-(A/T)TT(C/G)-3'. Cleavage occurs on the 3'-side of the TT dinucleotide at the point of strand exchange. HJ branch migration catalyzed by RuvA-RuvB allows RuvC to scan DNA until it finds its consensus sequence, where it cleaves and resolves the cruciform DNA. This chain is Crossover junction endodeoxyribonuclease RuvC, found in Cutibacterium acnes (strain DSM 16379 / KPA171202) (Propionibacterium acnes).